We begin with the raw amino-acid sequence, 167 residues long: MKERLPHEKGFHVSWDQIHRDSRALAWRLDGQGPDNGSWRAVVGITRGGLVPAMIVSRELDIRTVDTISVKSYNWQEQQAPTVIKAPQAELMGDGHGILIVDDLVDSGKTLELVRTLYPRAHFATVYAKPSGRPMVDTYITEVSQDTWIFFPWDMALQYVEPYRGRD.

Residues 47–48 (RG), Q79, and 102–110 (DDLVDSGKT) contribute to the 5-phospho-alpha-D-ribose 1-diphosphate site. Q79 contributes to the GMP binding site. D103 lines the Mg(2+) pocket. Guanine is bound by residues D106 and I149. Residues D106 and I149 each coordinate xanthine. GMP contacts are provided by residues 106–110 (DSGKT) and 148–149 (WI).

This sequence belongs to the purine/pyrimidine phosphoribosyltransferase family. XGPT subfamily. In terms of assembly, homotetramer. The cofactor is Mg(2+).

The protein localises to the cell inner membrane. It carries out the reaction GMP + diphosphate = guanine + 5-phospho-alpha-D-ribose 1-diphosphate. It catalyses the reaction XMP + diphosphate = xanthine + 5-phospho-alpha-D-ribose 1-diphosphate. The catalysed reaction is IMP + diphosphate = hypoxanthine + 5-phospho-alpha-D-ribose 1-diphosphate. The protein operates within purine metabolism; GMP biosynthesis via salvage pathway; GMP from guanine: step 1/1. Its pathway is purine metabolism; XMP biosynthesis via salvage pathway; XMP from xanthine: step 1/1. Purine salvage pathway enzyme that catalyzes the transfer of the ribosyl-5-phosphate group from 5-phospho-alpha-D-ribose 1-diphosphate (PRPP) to the N9 position of the 6-oxopurines guanine and xanthine to form the corresponding ribonucleotides GMP (guanosine 5'-monophosphate) and XMP (xanthosine 5'-monophosphate), with the release of PPi. To a lesser extent, also acts on hypoxanthine. The chain is Xanthine-guanine phosphoribosyltransferase from Cereibacter sphaeroides (strain ATCC 17029 / ATH 2.4.9) (Rhodobacter sphaeroides).